The following is a 457-amino-acid chain: Squalene epoxidase erg1 (457 aa).

FAD-binding positions include 15-16 (IT), 35-36 (ER), arginine 43, arginine 114, valine 130, aspartate 293, and methionine 306. 3 helical membrane passes run 347–364 (GYSFVINVLSIALYKLFT), 409–429 (FYAVCLYGIYQYVLSGPALLM), and 433–453 (IIESLLIFLQASLVIIPYILS).

The protein belongs to the squalene monooxygenase family. It depends on FAD as a cofactor.

It localises to the microsome membrane. The protein resides in the endoplasmic reticulum membrane. It is found in the vacuole membrane. The enzyme catalyses squalene + reduced [NADPH--hemoprotein reductase] + O2 = (S)-2,3-epoxysqualene + oxidized [NADPH--hemoprotein reductase] + H2O + H(+). It functions in the pathway terpene metabolism; lanosterol biosynthesis; lanosterol from farnesyl diphosphate: step 2/3. The protein operates within steroid metabolism; ergosterol biosynthesis. With respect to regulation, activity is blocked by the allylamine class antifungal terbinafine. Functionally, squalene epoxidase; part of the third module of ergosterol biosynthesis pathway that includes by the late steps of the pathway. Erg1 catalyzes the epoxidation of squalene into 2,3-epoxysqualene. The third module or late pathway involves the ergosterol synthesis itself through consecutive reactions that mainly occur in the endoplasmic reticulum (ER) membrane. Firstly, the squalene synthase erg9 catalyzes the condensation of 2 farnesyl pyrophosphate moieties to form squalene, which is the precursor of all steroids. Secondly, squalene is converted into lanosterol by the consecutive action of the squalene epoxidase erg1 and the lanosterol synthase erg7. The lanosterol 14-alpha-demethylase erg11/cyp1 catalyzes C14-demethylation of lanosterol to produce 4,4'-dimethyl cholesta-8,14,24-triene-3-beta-ol. In the next steps, a complex process involving various demethylation, reduction and desaturation reactions catalyzed by the C-14 reductase erg24 and the C-4 demethylation complex erg25-erg26-erg27 leads to the production of zymosterol. Erg28 likely functions in the C-4 demethylation complex reaction by tethering erg26 and Erg27 to the endoplasmic reticulum or to facilitate interaction between these proteins. Then, the sterol 24-C-methyltransferase erg6 catalyzes the methyl transfer from S-adenosyl-methionine to the C-24 of zymosterol to form fecosterol. The C-8 sterol isomerase erg2 catalyzes the reaction which results in unsaturation at C-7 in the B ring of sterols and thus converts fecosterol to episterol. The sterol-C5-desaturases erg31 and erg32 then catalyze the introduction of a C-5 double bond in the B ring to produce 5-dehydroepisterol. The C-22 sterol desaturase erg5 further converts 5-dehydroepisterol into ergosta-5,7,22,24(28)-tetraen-3beta-ol by forming the C-22(23) double bond in the sterol side chain. Finally, ergosta-5,7,22,24(28)-tetraen-3beta-ol is substrate of the C-24(28) sterol reductase erg4 to produce ergosterol. In the genus Schizosaccharomyces, a second route exists between lanosterol and fecosterol, via the methylation of lanosterol to eburicol by erg6, followed by C14-demethylation by erg11/cyp1 and C4-demethylation by the demethylation complex erg25-erg26-erg27. The chain is Squalene epoxidase erg1 from Schizosaccharomyces pombe (strain 972 / ATCC 24843) (Fission yeast).